The sequence spans 254 residues: Type III pantothenate kinase (254 aa).

6–13 (DVGNTNTT) is an ATP binding site. Substrate-binding positions include tyrosine 100 and 107–110 (GADR). Residue aspartate 109 is the Proton acceptor of the active site. Aspartate 129 is a binding site for K(+). Threonine 132 is a binding site for ATP. Threonine 184 serves as a coordination point for substrate.

The protein belongs to the type III pantothenate kinase family. As to quaternary structure, homodimer. Requires NH4(+) as cofactor. The cofactor is K(+).

The protein resides in the cytoplasm. It carries out the reaction (R)-pantothenate + ATP = (R)-4'-phosphopantothenate + ADP + H(+). Its pathway is cofactor biosynthesis; coenzyme A biosynthesis; CoA from (R)-pantothenate: step 1/5. Functionally, catalyzes the phosphorylation of pantothenate (Pan), the first step in CoA biosynthesis. The protein is Type III pantothenate kinase of Anaeromyxobacter dehalogenans (strain 2CP-1 / ATCC BAA-258).